The primary structure comprises 321 residues: GDP-L-fucose synthase (321 aa).

14–20 (GGSGLVG) lines the NADP(+) pocket. Y143 functions as the Proton donor/acceptor in the catalytic mechanism. NADP(+) is bound by residues K147, 170-173 (PTNV), and H186. 4 residues coordinate substrate: K194, W208, R215, and D277.

It belongs to the NAD(P)-dependent epimerase/dehydratase family. Fucose synthase subfamily. In terms of assembly, homodimer.

The catalysed reaction is GDP-beta-L-fucose + NADP(+) = GDP-4-dehydro-alpha-D-rhamnose + NADPH + H(+). Its pathway is nucleotide-sugar biosynthesis; GDP-L-fucose biosynthesis via de novo pathway; GDP-L-fucose from GDP-alpha-D-mannose: step 2/2. Catalyzes the two-step NADP-dependent conversion of GDP-4-dehydro-6-deoxy-D-mannose to GDP-fucose, involving an epimerase and a reductase reaction. The polypeptide is GDP-L-fucose synthase (GFUS) (Cricetulus griseus (Chinese hamster)).